The chain runs to 88 residues: Large ribosomal subunit protein bL31B (88 aa).

It belongs to the bacterial ribosomal protein bL31 family. Type B subfamily. Part of the 50S ribosomal subunit.

The chain is Large ribosomal subunit protein bL31B from Paraburkholderia xenovorans (strain LB400).